Consider the following 249-residue polypeptide: Leucyl/phenylalanyl-tRNA--protein transferase (249 aa).

The protein belongs to the L/F-transferase family.

It is found in the cytoplasm. It catalyses the reaction N-terminal L-lysyl-[protein] + L-leucyl-tRNA(Leu) = N-terminal L-leucyl-L-lysyl-[protein] + tRNA(Leu) + H(+). The catalysed reaction is N-terminal L-arginyl-[protein] + L-leucyl-tRNA(Leu) = N-terminal L-leucyl-L-arginyl-[protein] + tRNA(Leu) + H(+). The enzyme catalyses L-phenylalanyl-tRNA(Phe) + an N-terminal L-alpha-aminoacyl-[protein] = an N-terminal L-phenylalanyl-L-alpha-aminoacyl-[protein] + tRNA(Phe). Functionally, functions in the N-end rule pathway of protein degradation where it conjugates Leu, Phe and, less efficiently, Met from aminoacyl-tRNAs to the N-termini of proteins containing an N-terminal arginine or lysine. This Cupriavidus metallidurans (strain ATCC 43123 / DSM 2839 / NBRC 102507 / CH34) (Ralstonia metallidurans) protein is Leucyl/phenylalanyl-tRNA--protein transferase.